The following is a 427-amino-acid chain: Glutamate-1-semialdehyde 2,1-aminomutase (427 aa).

K267 is subject to N6-(pyridoxal phosphate)lysine.

The protein belongs to the class-III pyridoxal-phosphate-dependent aminotransferase family. HemL subfamily. In terms of assembly, homodimer. Pyridoxal 5'-phosphate serves as cofactor.

The protein resides in the cytoplasm. It carries out the reaction (S)-4-amino-5-oxopentanoate = 5-aminolevulinate. It functions in the pathway porphyrin-containing compound metabolism; protoporphyrin-IX biosynthesis; 5-aminolevulinate from L-glutamyl-tRNA(Glu): step 2/2. In Syntrophotalea carbinolica (strain DSM 2380 / NBRC 103641 / GraBd1) (Pelobacter carbinolicus), this protein is Glutamate-1-semialdehyde 2,1-aminomutase.